The primary structure comprises 227 residues: Guanylate kinase (227 aa).

The 179-residue stretch at 21–199 (GNLFMVVAPS…ALAELECIVA (179 aa)) folds into the Guanylate kinase-like domain. 28 to 35 (APSGAGKS) lines the ATP pocket.

Belongs to the guanylate kinase family.

It is found in the cytoplasm. The enzyme catalyses GMP + ATP = GDP + ADP. Essential for recycling GMP and indirectly, cGMP. The polypeptide is Guanylate kinase (Burkholderia lata (strain ATCC 17760 / DSM 23089 / LMG 22485 / NCIMB 9086 / R18194 / 383)).